A 249-amino-acid chain; its full sequence is 2,3-bisphosphoglycerate-dependent phosphoglycerate mutase (249 aa).

Substrate contacts are provided by residues 8–15 (RHGESTWN), 21–22 (TG), arginine 60, 87–90 (ERHY), lysine 98, 114–115 (RR), and 183–184 (GN). The Tele-phosphohistidine intermediate role is filled by histidine 9. Residue glutamate 87 is the Proton donor/acceptor of the active site.

This sequence belongs to the phosphoglycerate mutase family. BPG-dependent PGAM subfamily. As to quaternary structure, homodimer.

The catalysed reaction is (2R)-2-phosphoglycerate = (2R)-3-phosphoglycerate. It participates in carbohydrate degradation; glycolysis; pyruvate from D-glyceraldehyde 3-phosphate: step 3/5. Functionally, catalyzes the interconversion of 2-phosphoglycerate and 3-phosphoglycerate. In Aromatoleum aromaticum (strain DSM 19018 / LMG 30748 / EbN1) (Azoarcus sp. (strain EbN1)), this protein is 2,3-bisphosphoglycerate-dependent phosphoglycerate mutase.